The chain runs to 83 residues: MMGSMVSNGYLLLFTCWFLFVFGLMTIFNFVEIPLYVDGDVSPIRSYYPCILILTCTVVFFVWLFFNWLGLKYFRHSPSAMRR.

This is an uncharacterized protein from Schizosaccharomyces pombe (strain 972 / ATCC 24843) (Fission yeast).